The following is a 247-amino-acid chain: TM2 domain-containing protein 3 (247 aa).

The signal sequence occupies residues methionine 1–serine 30. The Extracellular portion of the chain corresponds to phenylalanine 31 to asparagine 179. Asparagine 87, asparagine 99, asparagine 139, asparagine 155, asparagine 169, and asparagine 179 each carry an N-linked (GlcNAc...) asparagine glycan. Residues tryptophan 180–glycine 200 traverse the membrane as a helical segment. The TM2 domain occupies glycine 183–phenylalanine 231. The Cytoplasmic portion of the chain corresponds to alanine 201–lysine 215. A helical transmembrane segment spans residues leucine 216–glycine 236. At tyrosine 237–isoleucine 247 the chain is on the extracellular side.

This sequence belongs to the TM2 family.

The protein localises to the membrane. In Xenopus laevis (African clawed frog), this protein is TM2 domain-containing protein 3 (tm2d3).